Consider the following 361-residue polypeptide: Outer mitochondrial transmembrane helix translocase (361 aa).

The Mitochondrial intermembrane portion of the chain corresponds to 1–15 (MVHAEAFSRPLSRNE). Residues 16–32 (VVGLIFRLTIFGAVTYF) traverse the membrane as a helical segment. The Cytoplasmic segment spans residues 33 to 361 (TIKWMVDAID…QSVLTHVCLD (329 aa)). An ATP-binding site is contributed by 133–140 (GPPGCGKT). A Phosphoserine modification is found at serine 322.

This sequence belongs to the AAA ATPase family. MSP1 subfamily. In terms of assembly, interacts with GRIA2 and GRIP1 in an ATP-dependent manner. ATAD1-catalyzed ATP hydrolysis disrupts not only its binding to GRIA2 and GRIP1, but also interaction between GRIP1 and GRIA2, leading to AMPAR complex disassembly.

It localises to the mitochondrion outer membrane. The protein resides in the peroxisome membrane. Its subcellular location is the postsynaptic cell membrane. The catalysed reaction is [protein]-with a C-terminal TM segment(out) + ATP + H2O = [protein]-with a C-terminal TM segment(in) + ADP + phosphate + H(+). Outer mitochondrial translocase required to remove mislocalized tail-anchored transmembrane proteins on mitochondria. Specifically recognizes and binds tail-anchored transmembrane proteins: acts as a dislocase that mediates the ATP-dependent extraction of mistargeted tail-anchored transmembrane proteins from the mitochondrion outer membrane. Also plays a critical role in regulating the surface expression of AMPA receptors (AMPAR), thereby regulating synaptic plasticity and learning and memory. Required for NMDA-stimulated AMPAR internalization and inhibition of GRIA1 and GRIA2 recycling back to the plasma membrane; these activities are ATPase-dependent. The chain is Outer mitochondrial transmembrane helix translocase from Rattus norvegicus (Rat).